A 211-amino-acid polypeptide reads, in one-letter code: Troponin I, cardiac muscle (211 aa).

Positions 1–23 are disordered; that stretch reads MADESGDAAGCPPPAPAPIRRQS. At Ala-2 the chain carries N-acetylalanine. The residue at position 5 (Ser-5) is a Phosphoserine. Phosphoserine; by PKA and PKD/PRKD1 occurs at positions 23 and 24. Tyr-27 carries the post-translational modification Phosphotyrosine. Thr-32 carries the post-translational modification Phosphothreonine; by STK4/MST1. Positions 33–80 are involved in binding TNC; that stretch reads EPHAKKKSKISASRKLQLKTLMLQIAKQELEREAEERRGEKGRALSTR. A phosphoserine; by PKC/PRKCE mark is found at Ser-43 and Ser-45. Residue Thr-52 is modified to Phosphothreonine; by STK4/MST1. Ser-78 is modified (phosphoserine). Thr-79 carries the post-translational modification Phosphothreonine. 2 positions are modified to phosphothreonine; by STK4/MST1: Thr-130 and Thr-144. The interval 130–150 is involved in binding TNC and actin; it reads TQKIFDLRGKFKRPTLRRVRI. Ser-151 bears the Phosphoserine; by PAK3 mark. The residue at position 167 (Ser-167) is a Phosphoserine. Thr-182 is modified (phosphothreonine). Position 200 is a phosphoserine (Ser-200).

It belongs to the troponin I family. As to quaternary structure, binds to actin and tropomyosin. Interacts with TRIM63. Interacts with STK4/MST1. Post-translationally, phosphorylated at Ser-23 and Ser-24 by PRKD1; phosphorylation reduces myofilament calcium sensitivity. Phosphorylated preferentially at Thr-32. Phosphorylation by STK4/MST1 alters its binding affinity to TNNC1 (cardiac Tn-C) and TNNT2 (cardiac Tn-T). Phosphorylated at Ser-43 and Ser-45 by PRKCE; phosphorylation increases myocardium contractile dysfunction.

Its function is as follows. Troponin I is the inhibitory subunit of troponin, the thin filament regulatory complex which confers calcium-sensitivity to striated muscle actomyosin ATPase activity. This Canis lupus familiaris (Dog) protein is Troponin I, cardiac muscle (TNNI3).